We begin with the raw amino-acid sequence, 257 residues long: Ribonuclease HII (257 aa).

Positions 72-257 (TYIAGIDEVG…FAPIKDMIQK (186 aa)) constitute an RNase H type-2 domain. A divalent metal cation is bound by residues Asp-78, Glu-79, and Asp-170.

This sequence belongs to the RNase HII family. Mn(2+) serves as cofactor. Mg(2+) is required as a cofactor.

Its subcellular location is the cytoplasm. It carries out the reaction Endonucleolytic cleavage to 5'-phosphomonoester.. Functionally, endonuclease that specifically degrades the RNA of RNA-DNA hybrids. This Bacillus mycoides (strain KBAB4) (Bacillus weihenstephanensis) protein is Ribonuclease HII.